We begin with the raw amino-acid sequence, 274 residues long: 2,3,4,5-tetrahydropyridine-2,6-dicarboxylate N-succinyltransferase (274 aa).

Substrate is bound by residues Arg-104 and Asp-141.

Belongs to the transferase hexapeptide repeat family. As to quaternary structure, homotrimer.

The protein resides in the cytoplasm. It catalyses the reaction (S)-2,3,4,5-tetrahydrodipicolinate + succinyl-CoA + H2O = (S)-2-succinylamino-6-oxoheptanedioate + CoA. It functions in the pathway amino-acid biosynthesis; L-lysine biosynthesis via DAP pathway; LL-2,6-diaminopimelate from (S)-tetrahydrodipicolinate (succinylase route): step 1/3. The protein is 2,3,4,5-tetrahydropyridine-2,6-dicarboxylate N-succinyltransferase of Shewanella baltica (strain OS155 / ATCC BAA-1091).